A 266-amino-acid chain; its full sequence is uncharacterized protein (266 aa).

The N-terminal stretch at 1-22 is a signal peptide; that stretch reads MGYLKRLVLYIVIMVMSVFIIG. Cys23 carries N-palmitoyl cysteine lipidation. The S-diacylglycerol cysteine moiety is linked to residue Cys23.

This sequence belongs to the staphylococcal tandem lipoprotein family.

It is found in the cell membrane. This is an uncharacterized protein from Staphylococcus aureus (strain USA300).